We begin with the raw amino-acid sequence, 716 residues long: Probable extracellular serine carboxypeptidase (716 aa).

The first 17 residues, 1-17 (MVKLTACLLLLVAAVQA), serve as a signal peptide directing secretion. N-linked (GlcNAc...) asparagine glycans are attached at residues N143 and N174. S188 acts as the Charge relay system in catalysis. N258 and N354 each carry an N-linked (GlcNAc...) asparagine glycan. D466 (charge relay system) is an active-site residue. N507 and N550 each carry an N-linked (GlcNAc...) asparagine glycan. Residues 617-636 (RDLAAQPSKSKKDRRGQQLS) form a disordered region. The chain crosses the membrane as a helical span at residues 652 to 672 (LGFVSFLVFAFSSFTFIPDIE).

It belongs to the peptidase S28 family.

The protein localises to the membrane. It localises to the secreted. In Arthroderma benhamiae (strain ATCC MYA-4681 / CBS 112371) (Trichophyton mentagrophytes), this protein is Probable extracellular serine carboxypeptidase.